The sequence spans 691 residues: TBC1 domain family member 15 (691 aa).

The residue at position 2 (A2) is an N-acetylalanine. Phosphoserine occurs at positions 23, 70, 205, 213, and 274. One can recognise a Rab-GAP TBC domain in the interval 346–556 (GLSHALRKQA…RLWEVMWTEL (211 aa)). Phosphoserine is present on residues S640 and S675. Position 689 is a phosphothreonine (T689).

As to quaternary structure, interacts with non-phosphorylated form of RAB8A; phosphorylation of RAB8A at 'Thr-72' disrupts this interaction. Interacts with ARMC12. In terms of tissue distribution, ubiquitous.

Its subcellular location is the cytoplasm. In terms of biological role, acts as a GTPase activating protein for RAB7A. Does not act on RAB4, RAB5 or RAB6. The sequence is that of TBC1 domain family member 15 (TBC1D15) from Homo sapiens (Human).